The following is a 297-amino-acid chain: GTP cyclohydrolase FolE2 (297 aa).

Belongs to the GTP cyclohydrolase IV family.

It carries out the reaction GTP + H2O = 7,8-dihydroneopterin 3'-triphosphate + formate + H(+). The protein operates within cofactor biosynthesis; 7,8-dihydroneopterin triphosphate biosynthesis; 7,8-dihydroneopterin triphosphate from GTP: step 1/1. Its function is as follows. Converts GTP to 7,8-dihydroneopterin triphosphate. In Pseudomonas fluorescens (strain ATCC BAA-477 / NRRL B-23932 / Pf-5), this protein is GTP cyclohydrolase FolE2.